A 257-amino-acid polypeptide reads, in one-letter code: Imidazole glycerol phosphate synthase subunit HisF (257 aa).

Active-site residues include Asp-11 and Asp-130.

This sequence belongs to the HisA/HisF family. As to quaternary structure, heterodimer of HisH and HisF.

Its subcellular location is the cytoplasm. The enzyme catalyses 5-[(5-phospho-1-deoxy-D-ribulos-1-ylimino)methylamino]-1-(5-phospho-beta-D-ribosyl)imidazole-4-carboxamide + L-glutamine = D-erythro-1-(imidazol-4-yl)glycerol 3-phosphate + 5-amino-1-(5-phospho-beta-D-ribosyl)imidazole-4-carboxamide + L-glutamate + H(+). It functions in the pathway amino-acid biosynthesis; L-histidine biosynthesis; L-histidine from 5-phospho-alpha-D-ribose 1-diphosphate: step 5/9. Functionally, IGPS catalyzes the conversion of PRFAR and glutamine to IGP, AICAR and glutamate. The HisF subunit catalyzes the cyclization activity that produces IGP and AICAR from PRFAR using the ammonia provided by the HisH subunit. The polypeptide is Imidazole glycerol phosphate synthase subunit HisF (Aliivibrio fischeri (strain MJ11) (Vibrio fischeri)).